The following is a 366-amino-acid chain: RNA 3'-terminal phosphate cyclase (366 aa).

ATP-binding residues include Gln104, Pro131, Tyr294, Asp297, Gln298, and His320. Residue His320 is the Tele-AMP-histidine intermediate of the active site.

This sequence belongs to the RNA 3'-terminal cyclase family. Type 1 subfamily. As to expression, detected in retinal ganglion cells (RGCs) (at protein level).

It is found in the nucleus. It localises to the nucleoplasm. The catalysed reaction is a 3'-end 3'-phospho-ribonucleotide-RNA + ATP = a 3'-end 2',3'-cyclophospho-ribonucleotide-RNA + AMP + diphosphate. Catalyzes the conversion of 3'-phosphate to a 2',3'-cyclic phosphodiester at the end of RNA. The mechanism of action of the enzyme occurs in 3 steps: (A) adenylation of the enzyme by ATP; (B) transfer of adenylate to an RNA-N3'P to produce RNA-N3'PP5'A; (C) and attack of the adjacent 2'-hydroxyl on the 3'-phosphorus in the diester linkage to produce the cyclic end product. Likely functions in some aspects of cellular RNA processing. Function plays an important role in regulating axon regeneration by inhibiting central nervous system (CNS) axon regeneration following optic nerve injury. The chain is RNA 3'-terminal phosphate cyclase from Mus musculus (Mouse).